We begin with the raw amino-acid sequence, 391 residues long: Processive diacylglycerol beta-glucosyltransferase (391 aa).

The protein belongs to the glycosyltransferase 28 family. UgtP subfamily.

It is found in the cell membrane. The catalysed reaction is a 1,2-diacyl-3-O-(beta-D-glucopyranosyl)-sn-glycerol + UDP-alpha-D-glucose = a 1,2-diacyl-3-O-(beta-D-Glc-(1-&gt;6)-beta-D-Glc)-sn-glycerol + UDP + H(+). It carries out the reaction a 1,2-diacyl-sn-glycerol + UDP-alpha-D-glucose = a 1,2-diacyl-3-O-(beta-D-glucopyranosyl)-sn-glycerol + UDP + H(+). It functions in the pathway glycolipid metabolism; diglucosyl-diacylglycerol biosynthesis. Processive glucosyltransferase involved in the biosynthesis of both the bilayer- and non-bilayer-forming membrane glucolipids. Is able to successively transfer two glucosyl residues to diacylglycerol (DAG), thereby catalyzing the formation of beta-monoglucosyl-DAG (3-O-(beta-D-glucopyranosyl)-1,2-diacyl-sn-glycerol) and beta-diglucosyl-DAG (3-O-(beta-D-glucopyranosyl-beta-(1-&gt;6)-D-glucopyranosyl)-1,2-diacyl-sn-glycerol). Beta-diglucosyl-DAG is the predominant glycolipid found in Bacillales and is also used as a membrane anchor for lipoteichoic acid (LTA). This chain is Processive diacylglycerol beta-glucosyltransferase, found in Staphylococcus haemolyticus (strain JCSC1435).